We begin with the raw amino-acid sequence, 186 residues long: MKTAHEIRPGNVIMLDGSPWVVQKTETTRSGRNAAIVKMKLKNLLQESSTETTFKGEDKMEDIILDRLDCTYSYFADPMYVFMDAEYNQYDVEADNLGDAAAYIVDGMEEQCQVTFYEGKAISVELPTTVVREVTYTEPSARGDTSGKVMKPATIAGGATLSVADFVKTGDLIEIDTRTHEFKKRA.

This sequence belongs to the elongation factor P family.

It localises to the cytoplasm. Its pathway is protein biosynthesis; polypeptide chain elongation. Its function is as follows. Involved in peptide bond synthesis. Stimulates efficient translation and peptide-bond synthesis on native or reconstituted 70S ribosomes in vitro. Probably functions indirectly by altering the affinity of the ribosome for aminoacyl-tRNA, thus increasing their reactivity as acceptors for peptidyl transferase. The sequence is that of Elongation factor P from Shewanella loihica (strain ATCC BAA-1088 / PV-4).